Consider the following 463-residue polypeptide: uncharacterized protein (463 aa).

The TRAM domain maps to 9–67; that stretch reads VLKKGQRFPLTIKRLGINGEGVGYFKRHVVFVPGALPGEEVVVEVTDVKPRFAEASIRK. [4Fe-4S] cluster-binding residues include Cys-80, Cys-86, Cys-89, and Cys-169. S-adenosyl-L-methionine-binding residues include Gln-293, Tyr-322, Asp-343, and Asp-391. Residue Cys-418 is the Nucleophile of the active site.

It belongs to the class I-like SAM-binding methyltransferase superfamily. RNA M5U methyltransferase family.

This is an uncharacterized protein from Halalkalibacterium halodurans (strain ATCC BAA-125 / DSM 18197 / FERM 7344 / JCM 9153 / C-125) (Bacillus halodurans).